Consider the following 359-residue polypeptide: Gap junction alpha-5 protein (359 aa).

Topologically, residues 1 to 19 are cytoplasmic; the sequence is MGDWSFLGEFLEEVHKHST. Residues 20 to 40 form a helical membrane-spanning segment; sequence VIGKVWLTVLFIFRMLVLGTA. Topologically, residues 41–76 are extracellular; sequence AESSWGDEQADFLCDTMQPGCENVCYDQAFPISHIR. The chain crosses the membrane as a helical span at residues 77 to 97; sequence YWVLQVIFVSTPSLVYLGHAV. Over 98 to 165 the chain is Cytoplasmic; the sequence is HMVRVQEKRK…CSILIRTTME (68 aa). A helical membrane pass occupies residues 166–186; sequence VAFIVGQYLLYGVFLDTLHVC. At 187–206 the chain is on the extracellular side; that stretch reads RRSPCPHPVNCYVSRPTEKN. The chain crosses the membrane as a helical span at residues 207 to 227; that stretch reads VFIVFMLAVAGLSLFLSLAEL. Residues 228 to 359 lie on the Cytoplasmic side of the membrane; it reads YHLGWKKIRQ…SKARSDDLSV (132 aa). 2 disordered regions span residues 285-305 and 317-359; these read SNKM…VRSQ and RYAQ…DLSV. Phosphoserine occurs at positions 354 and 358.

This sequence belongs to the connexin family. Alpha-type (group II) subfamily. As to quaternary structure, a connexon is composed of a hexamer of connexins.

It localises to the cell membrane. It is found in the cell junction. The protein resides in the gap junction. Functionally, one gap junction consists of a cluster of closely packed pairs of transmembrane channels, the connexons, through which materials of low MW diffuse from one cell to a neighboring cell. The polypeptide is Gap junction alpha-5 protein (GJA5) (Bos taurus (Bovine)).